The chain runs to 139 residues: ATP synthase epsilon chain (139 aa).

Belongs to the ATPase epsilon chain family. As to quaternary structure, F-type ATPases have 2 components, CF(1) - the catalytic core - and CF(0) - the membrane proton channel. CF(1) has five subunits: alpha(3), beta(3), gamma(1), delta(1), epsilon(1). CF(0) has three main subunits: a, b and c.

Its subcellular location is the cell inner membrane. Its function is as follows. Produces ATP from ADP in the presence of a proton gradient across the membrane. This chain is ATP synthase epsilon chain, found in Acinetobacter baumannii (strain SDF).